The following is a 199-amino-acid chain: Protein P1 (199 aa).

The sequence is that of Protein P1 from Rice tungro bacilliform virus (isolate Philippines) (RTBV).